Reading from the N-terminus, the 322-residue chain is Acetylglutamate kinase (322 aa).

Substrate-binding positions include 89 to 90, arginine 111, and asparagine 217; that span reads GG.

The protein belongs to the acetylglutamate kinase family. ArgB subfamily.

The protein resides in the cytoplasm. It carries out the reaction N-acetyl-L-glutamate + ATP = N-acetyl-L-glutamyl 5-phosphate + ADP. It functions in the pathway amino-acid biosynthesis; L-arginine biosynthesis; N(2)-acetyl-L-ornithine from L-glutamate: step 2/4. In terms of biological role, catalyzes the ATP-dependent phosphorylation of N-acetyl-L-glutamate. In Ehrlichia ruminantium (strain Welgevonden), this protein is Acetylglutamate kinase.